The following is a 276-amino-acid chain: Mitochondrial outer membrane protein porin 6 (276 aa).

This sequence belongs to the eukaryotic mitochondrial porin (TC 1.B.8.1) family.

The protein resides in the mitochondrion outer membrane. Forms a channel through the mitochondrial outer membrane that allows diffusion of small hydrophilic molecules. The channel adopts an open conformation at low or zero membrane potential and a closed conformation at potentials above 30-40 mV. The open state has a weak anion selectivity whereas the closed state is cation-selective. The chain is Mitochondrial outer membrane protein porin 6 (VDAC6) from Oryza sativa subsp. japonica (Rice).